The following is a 273-amino-acid chain: Mediator of RNA polymerase II transcription subunit 18 (273 aa).

Residues 90-106 are compositionally biased toward low complexity; that stretch reads GAQSSAASSGDPDAPMS. The segment at 90-114 is disordered; it reads GAQSSAASSGDPDAPMSGTDTGTNF.

This sequence belongs to the Mediator complex subunit 18 family. As to quaternary structure, component of the Mediator complex.

Its subcellular location is the nucleus. Its function is as follows. Component of the Mediator complex, a coactivator involved in the regulated transcription of nearly all RNA polymerase II-dependent genes. Mediator functions as a bridge to convey information from gene-specific regulatory proteins to the basal RNA polymerase II transcription machinery. Mediator is recruited to promoters by direct interactions with regulatory proteins and serves as a scaffold for the assembly of a functional preinitiation complex with RNA polymerase II and the general transcription factors. The polypeptide is Mediator of RNA polymerase II transcription subunit 18 (srb5) (Aspergillus oryzae (strain ATCC 42149 / RIB 40) (Yellow koji mold)).